Consider the following 691-residue polypeptide: MIMVRRRARPAKETGGGSAAAAVASDGALSMDTAAAVAVAGGNHLLDDQYFASPKRKDCRLMKASENLKISSDVVALEEEANNKGVKPTKALTDRTIGVPLATRSQTRTIENFFKADAAAKCGITLNTHHPEPIKEQKTISTTELPLSDELGDEELERVVGDLLYDGHSTASSDSPSYQNENEHEEVMQDTFALRETSPVPVLMADFQTHRSGLRDSHSSSHSSSSSGGASATTDNIFLQEPVLTLDIDRTPTKASSIKINKSFELASAVFSSPPSVLNACRFNQIVTLNGGGQCEPQPVVVAQPQPQPQLQLPPHHNGFELDQHDSSSCDSGVACNLTISAESPAAGGGAGAAARRRKPATPHRILCPSPIKTLPRGDGGGLIVPGARKTSGIMMKGDLLSPRKSPRKLPTTTAAVAACKSRRRLNQPKPQAPYQPQQPQPPPGTQPTNEDVVAAEELENLNKIPIANSNKSNNHVKAMLKPAPAKPRAALTKGSKTKTGSKIQPGPLPLAATNGNREMTDFFPVRRSVRKTKTAVKEEWLRNLEQAVLEERSEGLQVRNFMGKGRGVVAVRHFKRNEFVVEYVGDLISISDATDRERRYALDENAGCYMYYFKHKNQQYCIDATVDTGKLGRLINHSRAGNLMTKVVVIKQRPHLVLLAKDDIAPGEELTYDYGDRSKESLLHHPWLAF.

Disordered regions lie at residues 1 to 22, 211 to 234, 345 to 381, 422 to 450, and 484 to 516; these read MIMV…AAAA, RSGL…SATT, PAAG…GDGG, SRRR…QPTN, and APAK…ATNG. A compositionally biased stretch (low complexity) spans 220–232; that stretch reads SSHSSSSSGGASA. Positions 431-446 are enriched in pro residues; sequence PQAPYQPQQPQPPPGT. Over residues 484–503 the composition is skewed to low complexity; the sequence is APAKPRAALTKGSKTKTGSK. Positions 555-676 constitute an SET domain; the sequence is EGLQVRNFMG…PGEELTYDYG (122 aa). Residues 565–567, Y610, and 637–638 contribute to the S-adenosyl-L-methionine site; these read KGR and NH.

Belongs to the class V-like SAM-binding methyltransferase superfamily. Histone-lysine methyltransferase family. PR/SET subfamily.

The protein resides in the nucleus. Its subcellular location is the chromosome. The catalysed reaction is L-lysyl(20)-[histone H4] + S-adenosyl-L-methionine = N(6)-methyl-L-lysyl(20)-[histone H4] + S-adenosyl-L-homocysteine + H(+). In terms of biological role, histone methyltransferase that specifically monomethylates 'Lys-20' of histone H4. H4 'Lys-20' monomethylation is enriched during mitosis and represents a specific tag for epigenetic transcriptional repression. Mainly functions in euchromatin regions, thereby playing a central role in the silencing of euchromatic genes. Required for cell proliferation, possibly by contributing to the maintenance of proper higher-order structure of DNA and chromosome condensation during mitosis. This Drosophila pseudoobscura pseudoobscura (Fruit fly) protein is Histone-lysine N-methyltransferase Set8.